The chain runs to 217 residues: tRNA (guanine-N(7)-)-methyltransferase (217 aa).

4 residues coordinate S-adenosyl-L-methionine: glutamate 45, glutamate 70, aspartate 97, and aspartate 119. The active site involves aspartate 119. Lysine 123 is a binding site for substrate. Residues 125–130 form an interaction with RNA region; sequence RHEKRR. Residues aspartate 155 and 195 to 198 each bind substrate; that span reads TEYE.

Belongs to the class I-like SAM-binding methyltransferase superfamily. TrmB family.

It catalyses the reaction guanosine(46) in tRNA + S-adenosyl-L-methionine = N(7)-methylguanosine(46) in tRNA + S-adenosyl-L-homocysteine. Its pathway is tRNA modification; N(7)-methylguanine-tRNA biosynthesis. Functionally, catalyzes the formation of N(7)-methylguanine at position 46 (m7G46) in tRNA. This chain is tRNA (guanine-N(7)-)-methyltransferase, found in Lactobacillus helveticus (strain DPC 4571).